A 687-amino-acid chain; its full sequence is Adhesion G-protein coupled receptor G1 (687 aa).

An N-terminal signal peptide occupies residues 1 to 25 (MTAQSLLQMTLFLLSLLFLVQGAHG). 26 to 33 (RGHREDFR) contacts heparin. At 26–402 (RGHREDFRFC…VEVDAVHKHY (377 aa)) the chain is on the extracellular side. Intrachain disulfides connect cysteine 35–cysteine 91 and cysteine 121–cysteine 177. Residues asparagine 39, asparagine 148, and asparagine 171 are each glycosylated (N-linked (GlcNAc...) asparagine). 190-200 (LKHPQKASRRP) contributes to the heparin binding site. The region spanning 224 to 395 (DTVSFEEDRI…AVLMVSSVEV (172 aa)) is the GAIN-B domain. N-linked (GlcNAc...) asparagine glycans are attached at residues asparagine 234, asparagine 303, asparagine 324, and asparagine 341. Cystine bridges form between cysteine 346–cysteine 377 and cysteine 366–cysteine 379. The GPS stretch occupies residues 346–395 (CVFWVEDPTLSSPGHWSSAGCETVRRETQTSCFCNHLTYFAVLMVSSVEV). The segment at 384-397 (YFAVLMVSSVEVDA) is stachel. Residues 403–423 (LSLLSYVGCVISALACVVTIA) traverse the membrane as a helical segment. Over 424–442 (AYLCSRRKPRDYTIKVHMN) the chain is Cytoplasmic. Residues 443–463 (LLLAVFLLDMSFLLSEPVALT) traverse the membrane as a helical segment. Residues 464–470 (GSEAGCR) are Extracellular-facing. The chain crosses the membrane as a helical span at residues 471 to 491 (AGAIFLHFSLLACLSWMGLEG). The Cytoplasmic portion of the chain corresponds to 492-512 (YNLYRLVVEVFGTYVPGYLLK). The helical transmembrane segment at 513 to 533 (LSAMGWGFPIFLVTLVALVDV) threads the bilayer. The Extracellular segment spans residues 534-570 (DNYGPIILAVHRTPESVIYPSMCWIRDSLVSYVTNLG). The helical transmembrane segment at 571–591 (LFSLVFLFNMAMLGTMVVQIL) threads the bilayer. The Cytoplasmic portion of the chain corresponds to 592–603 (RLRPHTQKWSHV). A helical transmembrane segment spans residues 604 to 624 (LTLLGLSLVLGLPWALIFFSF). Residues 625 to 630 (ASGTFQ) are Extracellular-facing. Residues 631 to 651 (LVVLYLFSIITSFQGFLIFIW) traverse the membrane as a helical segment. The Cytoplasmic portion of the chain corresponds to 652–687 (YWSMRLQARGGPSPLKSNSDSARLPISSGSTSSSRI). The interval 664 to 687 (SPLKSNSDSARLPISSGSTSSSRI) is disordered. Low complexity predominate over residues 678–687 (SSGSTSSSRI).

This sequence belongs to the G-protein coupled receptor 2 family. LN-TM7 subfamily. In terms of assembly, heterodimer of 2 chains generated by proteolytic processing; the large extracellular N-terminal fragment (ADGRG1 NT) and the membrane-bound C-terminal fragment (ADGRG1-CT) predominantly remain associated and non-covalently linked. ADGRG1 NT self-associates in a trans-trans manner; the homophilic interaction enhances receptor signaling. Interacts with TGM2. Interacts with heparin; leading to the reduction of ADGRG1 shedding. Interacts with COL3A1. Part of a GPCR-tetraspanin complex at least consisting of ADGRG1, CD81, eventually CD9, and GNA11 in which CD81 is enhancing the association of ADGRG1 with GNA11. Post-translationally, autoproteolytically cleaved into 2 fragments; the large extracellular N-terminal fragment (ADGRG1 NT) and the membrane-bound C-terminal fragment (ADGRG1 CT) predominantly remain associated and non-covalently linked. Shedding to yield the secreted ADGRG1 N-terminal fragment seems to involve metalloprotease(s). In terms of processing, ubiquitinated. Undergoes polyubiquitination upon activation.

Its subcellular location is the cell membrane. The protein resides in the secreted. It localises to the membrane raft. With respect to regulation, forms a heterodimer of 2 chains generated by proteolytic processing that remain associated through non-covalent interactions mediated by the GAIN-B domain. In the inactivated receptor, the Stachel sequence (also named stalk) is embedded in the GAIN-B domain, where it adopts a beta-strand conformation. On activation, the Stachel moves into the 7 transmembrane region and adopts a twisted hook-shaped configuration that forms contacts within the receptor, leading to coupling of a G-alpha protein, which activates signaling. The cleaved GAIN-B and N-terminal domains can then dissociate from the rest of the receptor. In terms of biological role, adhesion G-protein coupled receptor (aGPCR) for steroid hormone 17alpha-hydroxypregnenolone (17-OH), which is involved in cell adhesion and cell-cell interactions. Ligand binding causes a conformation change that triggers signaling via guanine nucleotide-binding proteins (G proteins) and modulates the activity of downstream effectors, such as RhoA pathway. ADGRG1 is coupled to G(12) and/or G(13) G proteins (GNA12 and GNA13, respectively) and mediates the activation Rho small GTPases. Acts as a potent suppressor of ferroptosis: binding to 17-OH-binding initiates signaling that down-regulates CD36 and alleviates ferroptosis-induced liver injury. Ligand-binding also induces cell adhesion activity via association with proteins such as collagen III/COL3A1 and TGM2. Mediates cell matrix adhesion in developing neurons and hematopoietic stem cells. Involved in cortical development, specifically in maintenance of the pial basement membrane integrity and in cortical lamination: association with COL3A1 in the developing brain inhibits neuronal migration via activation of the RhoA pathway. Together with TGM2, acts as a regulator of myelination and myelin repair in oligodendrocyte precursor cells. Acts as a hemostatic sensor of shear force: G protein-coupled receptor signaling is activated in response to shear force in platelets, promoting G(13) G protein signaling, and platelet shape change and aggregation in a COL3A1-dependent manner. Acts as an inhibitor of VEGFA production thereby inhibiting angiogenesis through a signaling pathway mediated by PRKCA. Plays a role in the maintenance of hematopoietic stem cells in bone marrow niche. Plays an essential role in testis development. This Pongo pygmaeus (Bornean orangutan) protein is Adhesion G-protein coupled receptor G1 (ADGRG1).